The chain runs to 374 residues: DNA replication and repair protein RecF (374 aa).

30–37 (GENAQGKT) contributes to the ATP binding site.

The protein belongs to the RecF family.

Its subcellular location is the cytoplasm. The RecF protein is involved in DNA metabolism; it is required for DNA replication and normal SOS inducibility. RecF binds preferentially to single-stranded, linear DNA. It also seems to bind ATP. The protein is DNA replication and repair protein RecF of Pediococcus pentosaceus (strain ATCC 25745 / CCUG 21536 / LMG 10740 / 183-1w).